Reading from the N-terminus, the 72-residue chain is DNA gyrase inhibitor YacG (72 aa).

Zn(2+) contacts are provided by cysteine 17, cysteine 20, cysteine 32, and cysteine 36. The tract at residues 51 to 72 (IPGPEEEEMSYPPRSDDENRSR) is disordered.

This sequence belongs to the DNA gyrase inhibitor YacG family. In terms of assembly, interacts with GyrB. The cofactor is Zn(2+).

Its function is as follows. Inhibits all the catalytic activities of DNA gyrase by preventing its interaction with DNA. Acts by binding directly to the C-terminal domain of GyrB, which probably disrupts DNA binding by the gyrase. In Methylorubrum extorquens (strain PA1) (Methylobacterium extorquens), this protein is DNA gyrase inhibitor YacG.